The primary structure comprises 161 residues: Large ribosomal subunit protein uL10 (161 aa).

Belongs to the universal ribosomal protein uL10 family. As to quaternary structure, part of the ribosomal stalk of the 50S ribosomal subunit. The N-terminus interacts with L11 and the large rRNA to form the base of the stalk. The C-terminus forms an elongated spine to which L12 dimers bind in a sequential fashion forming a multimeric L10(L12)X complex.

Forms part of the ribosomal stalk, playing a central role in the interaction of the ribosome with GTP-bound translation factors. The protein is Large ribosomal subunit protein uL10 (rplJ) of Mycoplasma pneumoniae (strain ATCC 29342 / M129 / Subtype 1) (Mycoplasmoides pneumoniae).